Here is an 826-residue protein sequence, read N- to C-terminus: Dolichyl-diphosphooligosaccharide--protein glycosyltransferase subunit STT3B (826 aa).

Residues 1 to 60 form a disordered region; the sequence is MAEPSAPESKHKSSLNSSPWSGLMALGNSRHGHHGPGAQCAHKAAGGVAPPKPAPAGLSG. An N-acetylalanine modification is found at Ala-2. Residues 2-41 are Cytoplasmic-facing; sequence AEPSAPESKHKSSLNSSPWSGLMALGNSRHGHHGPGAQCA. 3 positions are modified to phosphoserine: Ser-13, Ser-18, and Ser-29. The chain crosses the membrane as a helical span at residues 42–86; that stretch reads HKAAGGVAPPKPAPAGLSGGLSQPAGWQSLLSFTILFLAWLAGFS. Topologically, residues 87–173 are lumenal; that stretch reads SRLFAVIRFE…VHIRDVCVFL (87 aa). The DXD motif 1 motif lies at 101–103; that stretch reads EFD. Asp-103 lines the Mn(2+) pocket. The helical transmembrane segment at 174-192 threads the bilayer; that stretch reads APTFSGLTSISTFLLTREL. Topologically, residues 193–194 are cytoplasmic; the sequence is WN. Residues 195–212 form a helical membrane-spanning segment; that stretch reads QGAGLLAACFIAIVPGYI. The Lumenal segment spans residues 213-223; sequence SRSVAGSFDNE. Asp-221 and Glu-223 together coordinate Mn(2+). Positions 221 to 223 match the DXD motif 2 motif; it reads DNE. A helical membrane pass occupies residues 224–243; sequence GIAIFALQFTYYLWVKSVKT. Residues 244-245 lie on the Cytoplasmic side of the membrane; the sequence is GS. Residues 246-260 form a helical membrane-spanning segment; the sequence is VFWTMCCCLSYFYMV. The Lumenal segment spans residues 261–265; sequence SAWGG. The chain crosses the membrane as a helical span at residues 266–282; it reads YVFIINLIPLHVFVLLL. At 283-287 the chain is on the cytoplasmic side; the sequence is MQRYS. The helical transmembrane segment at 288–313 threads the bilayer; the sequence is KRVYIAYSTFYIVGLILSMQIPFVGF. Topologically, residues 314 to 321 are lumenal; that stretch reads QPIRTSEH. A helical transmembrane segment spans residues 322 to 341; it reads MAAAGVFALLQAYAFLQYLR. The Cytoplasmic segment spans residues 342-350; it reads DRLTKQEFQ. The helical transmembrane segment at 351–371 threads the bilayer; it reads TLFFLGVSLAAGAVFLSVIYL. Residues 372–410 are Lumenal-facing; sequence TYTGYIAPWSGRFYSLWDTGYAKIHIPIIASVSEHQPTT. An SVSE motif motif is present at residues 402-405; the sequence is SVSE. The helical transmembrane segment at 411-433 threads the bilayer; it reads WVSFFFDLHILVCTFPAGLWFCI. The Cytoplasmic segment spans residues 434-439; the sequence is KNINDE. The helical transmembrane segment at 440–456 threads the bilayer; it reads RVFVALYAISAVYFAGV. The Lumenal portion of the chain corresponds to 457–460; sequence MVRL. Residue Arg-459 coordinates dolichyl diphosphooligosaccharide. The chain crosses the membrane as a helical span at residues 461 to 482; it reads MLTLTPVVCMLSAIAFSNVFEH. The Cytoplasmic portion of the chain corresponds to 483-526; sequence YLGDDMKRENPPVEDSSDEDDKRNPGNLYDKAGKVRKHVTEQEK. Positions 490-512 are disordered; sequence RENPPVEDSSDEDDKRNPGNLYD. Ser-498 and Ser-499 each carry phosphoserine. A helical transmembrane segment spans residues 527–552; it reads TEEGLGPNIKSIVTMLMLMLLMMFAV. At 553–826 the chain is on the lumenal side; sequence HCTWVTSNAY…KGKKISKKTV (274 aa). The tract at residues 604 to 606 is interacts with target acceptor peptide in protein substrate; that stretch reads WWD. Positions 604-608 match the WWDYG motif motif; sequence WWDYG. Position 609 (Tyr-609) interacts with dolichyl diphosphooligosaccharide. Asn-616 and Asn-623 each carry an N-linked (GlcNAc...) asparagine glycan. Asn-627 carries an N-linked (GlcNAc...) (high mannose) asparagine glycan. The N-linked (GlcNAc...) asparagine glycan is linked to Asn-641. The short motif at 671 to 678 is the DK motif element; the sequence is DINKFLWM.

This sequence belongs to the STT3 family. As to quaternary structure, component of the oligosaccharyltransferase (OST) complex. There are 2 OST complexes, OST-A and OST-B, which contain STT3A or STT3B as catalytic subunit, respectively. OST-A and OST-B contain common core subunits RPN1, RPN2, OST48, OST4, DAD1 and TMEM258, and OST-B contains either MAGT1 or TUSC3 as specific accessory subunit. It depends on Mg(2+) as a cofactor. Requires Mn(2+) as cofactor.

It localises to the endoplasmic reticulum. The protein resides in the endoplasmic reticulum membrane. The enzyme catalyses a di-trans,poly-cis-dolichyl diphosphooligosaccharide + L-asparaginyl-[protein] = N(4)-(oligosaccharide-(1-&gt;4)-N-acetyl-beta-D-glucosaminyl-(1-&gt;4)-N-acetyl-beta-D-glucosaminyl)-L-asparaginyl-[protein] + a di-trans,poly-cis-dolichyl diphosphate + H(+). The protein operates within protein modification; protein glycosylation. Its function is as follows. Catalytic subunit of the oligosaccharyl transferase (OST) complex that catalyzes the initial transfer of a defined glycan (Glc(3)Man(9)GlcNAc(2) in eukaryotes) from the lipid carrier dolichol-pyrophosphate to an asparagine residue within an Asn-X-Ser/Thr consensus motif in nascent polypeptide chains, the first step in protein N-glycosylation. N-glycosylation occurs cotranslationally and the complex associates with the Sec61 complex at the channel-forming translocon complex that mediates protein translocation across the endoplasmic reticulum (ER). All subunits are required for a maximal enzyme activity. This subunit contains the active site and the acceptor peptide and donor lipid-linked oligosaccharide (LLO) binding pockets. STT3B is present in a small subset of OST complexes and mediates both cotranslational and post-translational N-glycosylation of target proteins: STT3B-containing complexes are required for efficient post-translational glycosylation and while they are less competent than STT3A-containing complexes for cotranslational glycosylation, they have the ability to mediate glycosylation of some nascent sites that are not accessible for STT3A. STT3B-containing complexes also act post-translationally and mediate modification of skipped glycosylation sites in unfolded proteins. Plays a role in ER-associated degradation (ERAD) pathway that mediates ubiquitin-dependent degradation of misfolded endoplasmic reticulum proteins by mediating N-glycosylation of unfolded proteins, which are then recognized by the ERAD pathway and targeted for degradation. The polypeptide is Dolichyl-diphosphooligosaccharide--protein glycosyltransferase subunit STT3B (Canis lupus familiaris (Dog)).